A 57-amino-acid polypeptide reads, in one-letter code: Large ribosomal subunit protein bL32 (57 aa).

The protein belongs to the bacterial ribosomal protein bL32 family.

The chain is Large ribosomal subunit protein bL32 from Staphylococcus aureus (strain MSSA476).